Consider the following 391-residue polypeptide: Elongation factor Tu 1 (391 aa).

The tr-type G domain maps to 10 to 201 (KPHVNIGTIG…EVDNYIPTPE (192 aa)). The G1 stretch occupies residues 19–26 (GHVDHGKT). 19-26 (GHVDHGKT) is a binding site for GTP. Thr-26 is a Mg(2+) binding site. Residues 55–59 (GITIS) form a G2 region. The G3 stretch occupies residues 76–79 (DCPG). GTP is bound by residues 76-80 (DCPGH) and 131-134 (NKVD). The tract at residues 131-134 (NKVD) is G4. The segment at 169-171 (SAL) is G5.

Belongs to the TRAFAC class translation factor GTPase superfamily. Classic translation factor GTPase family. EF-Tu/EF-1A subfamily. As to quaternary structure, monomer.

It is found in the cytoplasm. The enzyme catalyses GTP + H2O = GDP + phosphate + H(+). Functionally, GTP hydrolase that promotes the GTP-dependent binding of aminoacyl-tRNA to the A-site of ribosomes during protein biosynthesis. This chain is Elongation factor Tu 1, found in Bartonella quintana (strain Toulouse) (Rochalimaea quintana).